Here is a 378-residue protein sequence, read N- to C-terminus: MELQEVLHMNEGEGDTSYAKNASYNLALAKVKPFLEQCIRELLRANLPNINKCIKVADLGCASGPNTLLTVRDIVQSIDKVGQEEKNELERPTIQIFLNDLFQNDFNSVFKLLPSFYRKLEKENGRKIGSCLISAMPGSFYGRLFPEESMHFLHSCYSVHWLSQVPSGLVIELGIGANKGSIYSSKGCRPPVQKAYLDQFTKDFTTFLRIHSKELFSRGRMLLTCICKVDEFDEPNPLDLLDMAINDLIVEGLLEEEKLDSFNIPFFTPSAEEVKCIVEEEGSCEILYLETFKAHYDAAFSIDDDYPVTSHEQIKAEYVASLIRSVYEPILASHFGEAIMPDLFHRLAKHAAKVLHMGKGCYNNLIISLAKKPEKSDV.

Tyrosine 18, cysteine 61, asparagine 66, aspartate 100, leucine 101, serine 139, phenylalanine 140, and cysteine 156 together coordinate S-adenosyl-L-homocysteine. The theobromine site is built by tyrosine 157, histidine 160, and tryptophan 161. Positions 178, 260, 262, and 263 each coordinate Mg(2+). Tyrosine 362 provides a ligand contact to theobromine.

The protein belongs to the methyltransferase superfamily. Type-7 methyltransferase family. Mg(2+) is required as a cofactor. As to expression, mainly expressed, at low levels, in leaves and fruits (grains). Also present, at lower levels, in roots, stamens and pistils.

Its subcellular location is the cytoplasm. The enzyme catalyses 7-methylxanthine + S-adenosyl-L-methionine = theobromine + S-adenosyl-L-homocysteine + H(+). The protein operates within alkaloid biosynthesis. In terms of biological role, involved in the biosynthesis of caffeine. Catalyzes the conversion of 7-methylxanthine (7mX) to theobromine and of paraxanthine to caffeine. The protein is 7-methylxanthine methyltransferase 1 of Coffea canephora (Robusta coffee).